Reading from the N-terminus, the 194-residue chain is Casparian strip membrane protein 2 (194 aa).

Residues 1–32 lie on the Cytoplasmic side of the membrane; that stretch reads MSTTIDIPESSKVVKGKGVVAAPLRPGGWKKG. A helical membrane pass occupies residues 33–53; that stretch reads VAIMDFILRLGAIAAALGAAA. Residues 54 to 82 are Extracellular-facing; that stretch reads TMGTSDQTLPFFTQFFQFEASYDSFTTFQ. A helical transmembrane segment spans residues 83–103; it reads FFVITMALVGGYLVLSLPFSV. The Cytoplasmic portion of the chain corresponds to 104-115; the sequence is VAIIRPHAVGPR. A helical membrane pass occupies residues 116–136; that stretch reads LFLIILDTVFLTLATASAASA. The Extracellular segment spans residues 137-168; it reads AAVVYLAHNGDQDTNWLAICNQFGDFCAQTSS. A helical membrane pass occupies residues 169-189; sequence AVVSSFVAVVVFVLLIVMSAL. Residues 190-194 are Cytoplasmic-facing; sequence AMGKP.

This sequence belongs to the Casparian strip membrane proteins (CASP) family. As to quaternary structure, homodimer and heterodimers.

Its subcellular location is the cell membrane. Its function is as follows. Regulates membrane-cell wall junctions and localized cell wall deposition. Required for establishment of the Casparian strip membrane domain (CSD) and the subsequent formation of Casparian strips, a cell wall modification of the root endodermis that determines an apoplastic barrier between the intraorganismal apoplasm and the extraorganismal apoplasm and prevents lateral diffusion. This Vigna unguiculata (Cowpea) protein is Casparian strip membrane protein 2.